The chain runs to 291 residues: Elongation factor Ts (291 aa).

The interval 80-83 (TDFV) is involved in Mg(2+) ion dislocation from EF-Tu.

This sequence belongs to the EF-Ts family.

The protein resides in the cytoplasm. Functionally, associates with the EF-Tu.GDP complex and induces the exchange of GDP to GTP. It remains bound to the aminoacyl-tRNA.EF-Tu.GTP complex up to the GTP hydrolysis stage on the ribosome. The protein is Elongation factor Ts of Ligilactobacillus salivarius (strain UCC118) (Lactobacillus salivarius).